The chain runs to 335 residues: Nonaprenyl diphosphate synthase (335 aa).

Residues K57, R60, and H90 each contribute to the isopentenyl diphosphate site. Residues D97 and D101 each contribute to the Mg(2+) site. Positions D97–D101 match the DDXXD motif motif. Isopentenyl diphosphate is bound at residue R107. The short motif at D223–D227 is the DDXXD motif element.

Belongs to the FPP/GGPP synthase family. Requires Mg(2+) as cofactor.

The catalysed reaction is isopentenyl diphosphate + (2E)-geranyl diphosphate = (2E,6E)-farnesyl diphosphate + diphosphate. It catalyses the reaction isopentenyl diphosphate + (2E,6E)-farnesyl diphosphate = (2E,6E,10E)-geranylgeranyl diphosphate + diphosphate. It carries out the reaction 5 isopentenyl diphosphate + (2E,6E,10E)-geranylgeranyl diphosphate = all-trans-nonaprenyl diphosphate + 5 diphosphate. It functions in the pathway isoprenoid biosynthesis; farnesyl diphosphate biosynthesis; farnesyl diphosphate from geranyl diphosphate and isopentenyl diphosphate. It participates in isoprenoid biosynthesis; geranylgeranyl diphosphate biosynthesis; geranylgeranyl diphosphate from farnesyl diphosphate and isopentenyl diphosphate: step 1/1. In terms of biological role, catalyzes the sequential condensations of isopentenyl pyrophosphate (IPP) with geranyl diphosphate (GPP) to yield (2E,6E)-farnesyl diphosphate (E,E-FPP), with E,E-FPP to yield geranylgeranyl diphosphate (GGPP) and with GGPP to yield nonaprenyl diphosphate. May also have weak activity with dimethylallyl diphosphate (DMAPP). In Mycobacterium tuberculosis (strain ATCC 25618 / H37Rv), this protein is Nonaprenyl diphosphate synthase.